Here is a 347-residue protein sequence, read N- to C-terminus: SUMO-activating enzyme subunit 1 (347 aa).

It belongs to the ubiquitin-activating E1 family. In terms of assembly, heterodimer of sae1 and uba2/sae2. The heterodimer corresponds to the two domains that are encoded on a single polypeptide chain in ubiquitin-activating enzyme E1. Interacts with ube2i.

It is found in the nucleus. It functions in the pathway protein modification; protein sumoylation. Functionally, the heterodimer acts as an E1 ligase for sumo1, sumo2, and sumo3. It mediates ATP-dependent activation of sumo proteins followed by formation of a thioester bond between a sumo protein and a conserved active site cysteine residue on uba2/sae2. This chain is SUMO-activating enzyme subunit 1 (sae1), found in Xenopus tropicalis (Western clawed frog).